The sequence spans 154 residues: MATILVLHGPNLNLLGTREPEIYGRETLADIDQKLMTLCLERGHHLHFLQSNAEYELIDRIHDARREGVNFIVINPAAFTHTSVALRDALAGVGIPFVECHLSNVFSREAFRHHSYFSDIAVGVVCGFGSQSYELALQAAFNYLDKNKPEQKHS.

Residue tyrosine 23 is the Proton acceptor of the active site. The substrate site is built by asparagine 75, histidine 81, and aspartate 88. The Proton donor role is filled by histidine 101. Substrate contacts are provided by residues 102-103 (LS) and arginine 112.

Belongs to the type-II 3-dehydroquinase family. Homododecamer.

The catalysed reaction is 3-dehydroquinate = 3-dehydroshikimate + H2O. Its pathway is metabolic intermediate biosynthesis; chorismate biosynthesis; chorismate from D-erythrose 4-phosphate and phosphoenolpyruvate: step 3/7. Functionally, catalyzes a trans-dehydration via an enolate intermediate. In Teredinibacter turnerae (strain ATCC 39867 / T7901), this protein is 3-dehydroquinate dehydratase.